Here is a 422-residue protein sequence, read N- to C-terminus: BTB/POZ domain-containing protein KCTD18 (422 aa).

A BTB domain is found at 12–80; the sequence is DILRLNVGGC…YLHGEVHIPT (69 aa). Disordered stretches follow at residues 289 to 357 and 376 to 422; these read VKNS…THLP and LRRT…DQTK. Positions 396 to 406 are enriched in pro residues; the sequence is PAGPPEPPPDA. Over residues 413 to 422 the composition is skewed to polar residues; that stretch reads WTENGQDQTK.

The sequence is that of BTB/POZ domain-containing protein KCTD18 (KCTD18) from Bos taurus (Bovine).